Here is a 121-residue protein sequence, read N- to C-terminus: Large ribosomal subunit protein uL14 (121 aa).

The protein belongs to the universal ribosomal protein uL14 family. Part of the 50S ribosomal subunit. Forms a cluster with proteins L3 and L19. In the 70S ribosome, L14 and L19 interact and together make contacts with the 16S rRNA in bridges B5 and B8.

Binds to 23S rRNA. Forms part of two intersubunit bridges in the 70S ribosome. This chain is Large ribosomal subunit protein uL14, found in Opitutus terrae (strain DSM 11246 / JCM 15787 / PB90-1).